The following is a 416-amino-acid chain: MATEPPSPLRVEAPGPPEMRTSPAIESTPEGTPQPAGGRLRFLNGCVPLSHQVAGHMYGKDKVGILQHPDGTVLKQLQPPPRGPRELEFYNMVYAADCFDGVLLELRKYLPKYYGIWSPPTAPNDLYLKLEDVTHKFNKPCIMDVKIGQKSYDPFASSEKIQQQVSKYPLMEEIGFLVLGMRVYHVHSDSYETENQHYGRSLTKETIKDGVSRFFHNGYCLRKDAVAASIQKIEKILQWFENQKQLNFYASSLLFVYEGSSQPTTTKLNDRTLAEKFLSKGQLSDTEVLEYNNNFHVLSSTANGKIESSVGKSLSKMYARHRKIYTKKHHSQTSLKVENLEQDNGWKSMSQEHLNGNVLSQLEKVFYHLPTGCQEIAEVEVRMIDFAHVFPSNTIDEGYVYGLKHLISVLRSILDN.

The segment at Met1–Gly38 is disordered. Ala2 is subject to N-acetylalanine. Residue Ser7 is modified to Phosphoserine. An ATP-binding site is contributed by Lys75. Arg82 provides a ligand contact to substrate. ATP contacts are provided by residues Glu131–Val133 and Asp144. Substrate is bound by residues Lys146, Lys160–Lys167, and Gln196. The Nuclear localization signal motif lies at Arg320–His330. Asp385 is a binding site for ATP. His388 is a binding site for substrate.

It belongs to the inositol phosphokinase (IPK) family. It depends on Mg(2+) as a cofactor. Ubiquitous, with the highest expression in skeletal muscle, liver, placenta, lung, peripheral blood leukocytes, kidney, spleen and colon.

Its subcellular location is the nucleus. The enzyme catalyses 1D-myo-inositol 1,4,5-trisphosphate + 2 ATP = 1D-myo-inositol 1,3,4,5,6-pentakisphosphate + 2 ADP + 2 H(+). It carries out the reaction 1D-myo-inositol 1,3,4,6-tetrakisphosphate + ATP = 1D-myo-inositol 1,3,4,5,6-pentakisphosphate + ADP + H(+). The catalysed reaction is 1-octadecanoyl-2-(5Z,8Z,11Z,14Z)-eicosatetraenoyl-sn-glycero-3-phospho-1D-myo-inositol 4,5-bisphosphate + ATP = 1-octadecanoyl-2-(5Z,8Z,11Z,14Z-eicosatetraenoyl)-sn-glycero-3-phospho-(1D-myo-inositol 3,4,5-triphosphate) + ADP + H(+). It catalyses the reaction a 1,2-diacyl-sn-glycero-3-phospho-(1D-myo-inositol-4,5-bisphosphate) + ATP = a 1,2-diacyl-sn-glycero-3-phospho-(1D-myo-inositol-3,4,5-trisphosphate) + ADP + H(+). The enzyme catalyses 1D-myo-inositol 1,4,5,6-tetrakisphosphate + ATP = 1D-myo-inositol 1,3,4,5,6-pentakisphosphate + ADP + H(+). The protein operates within phospholipid metabolism; phosphatidylinositol metabolism. With respect to regulation, inhibited by flavonoids that occupy the ATP-binding pocket. Inhibited by myricetin, quercetin, luteolin, kaempferol, isorhamnetin and diosmetin, and to a lesser degree by rhamnetin and apigenin. Inositol phosphate kinase with a broad substrate specificity. Phosphorylates inositol 1,4,5-trisphosphate (Ins(1,4,5)P3) first to inositol 1,3,4,5-tetrakisphosphate and then to inositol 1,3,4,5,6-pentakisphosphate (Ins(1,3,4,5,6)P5). Phosphorylates inositol 1,3,4,6-tetrakisphosphate (Ins(1,3,4,6)P4). Phosphorylates inositol 1,4,5,6-tetrakisphosphate (Ins(1,4,5,6)P4). Phosphorylates glycero-3-phospho-1D-myo-inositol 4,5-bisphosphate to glycero-3-phospho-1D-myo-inositol 3,4,5-trisphosphate. Plays an important role in MLKL-mediated necroptosis via its role in the biosynthesis of inositol pentakisphosphate (InsP5) and inositol hexakisphosphate (InsP6). Binding of these highly phosphorylated inositol phosphates to MLKL mediates the release of an N-terminal auto-inhibitory region, leading to activation of the kinase. Essential for activated phospho-MLKL to oligomerize and localize to the cell membrane during necroptosis. Required for normal embryonic development, probably via its role in the biosynthesis of inositol 1,3,4,5,6-pentakisphosphate (Ins(1,3,4,5,6)P5) and inositol hexakisphosphate (InsP6). This Homo sapiens (Human) protein is Inositol polyphosphate multikinase (IPMK).